The sequence spans 405 residues: L-rhamnonate dehydratase (405 aa).

2 residues coordinate substrate: His-33 and Arg-59. Residues Asp-226, Glu-252, and Glu-280 each coordinate Mg(2+). Residue His-329 is the Proton acceptor of the active site. Position 349 (Glu-349) interacts with substrate.

The protein belongs to the mandelate racemase/muconate lactonizing enzyme family. RhamD subfamily. Homooctamer; tetramer of dimers. Requires Mg(2+) as cofactor.

The catalysed reaction is L-rhamnonate = 2-dehydro-3-deoxy-L-rhamnonate + H2O. Functionally, catalyzes the dehydration of L-rhamnonate to 2-keto-3-deoxy-L-rhamnonate (KDR). This is L-rhamnonate dehydratase from Salmonella paratyphi A (strain AKU_12601).